A 340-amino-acid chain; its full sequence is Probable glucan endo-1,3-beta-glucosidase BG1 (340 aa).

The signal sequence occupies residues 1 to 25 (MDLRFLASLTLLLGLFFVNTNPTGG). E120 functions as the Proton donor in the catalytic mechanism. The active-site Nucleophile is the E262.

The protein belongs to the glycosyl hydrolase 17 family.

It is found in the secreted. The enzyme catalyses Hydrolysis of (1-&gt;3)-beta-D-glucosidic linkages in (1-&gt;3)-beta-D-glucans.. May play a role in plant defense against pathogens. In Arabidopsis thaliana (Mouse-ear cress), this protein is Probable glucan endo-1,3-beta-glucosidase BG1.